The chain runs to 91 residues: Large ribosomal subunit protein bL27 (91 aa).

Belongs to the bacterial ribosomal protein bL27 family.

The protein is Large ribosomal subunit protein bL27 of Chromobacterium violaceum (strain ATCC 12472 / DSM 30191 / JCM 1249 / CCUG 213 / NBRC 12614 / NCIMB 9131 / NCTC 9757 / MK).